A 590-amino-acid polypeptide reads, in one-letter code: Putative ferric-chelate reductase 1 (590 aa).

The chain crosses the membrane as a helical span at residues 2–22; the sequence is NPLGLFLIYLYTCALTPVSGY. The Reelin domain maps to 12–179; sequence YTCALTPVSG…APKIPSSTIP (168 aa). A DOMON domain is found at 217 to 330; it reads ECFFLSFRKD…RSYFIFLADG (114 aa). Positions 334 to 533 constitute a Cytochrome b561 domain; it reads DGLLYRHHRQ…VFVDLLLEAH (200 aa). The helical transmembrane segment at 371 to 391 threads the bilayer; it reads LHGAMMFIAWMTTVSIGVIIA. Heme b contacts are provided by histidine 372 and histidine 413. 2 helical membrane-spanning segments follow: residues 416–436 and 445–465; these read LMIT…IYRG and HPHL…LAVF. Histidine 445 contributes to the heme b binding site. N-linked (GlcNAc...) asparagine glycosylation is present at asparagine 478. Histidine 481 contacts heme b. 3 helical membrane-spanning segments follow: residues 482-502, 517-537, and 567-587; these read WATG…GMDL, IGFV…GFCL, and IVMT…LAAI.

It belongs to the FRRS1 family. Requires heme b as cofactor.

The protein localises to the membrane. Putative ferric-chelate reductases reduce Fe(3+) to Fe(2+) before its transport from the endosome to the cytoplasm. The protein is Putative ferric-chelate reductase 1 (frrs1) of Xenopus laevis (African clawed frog).